Consider the following 245-residue polypeptide: MSDEFSLADALPEHSPAKTSAVSNTKPGQPPQGWPGSNPWNNPSAPSSVPSGLPPSATPSTVPFGPAPTGMYPSVPPTGPPPGPPAPFPPSGPSCPPPGGPYPAPTVPGPGPTGPYPTPNMPFPELPRPYGAPTDPAAAGPLGPWGSMSSGPWAPGMGGQYPTPNMPYPSPGPYPAPPPPQAPGAAPPVPWGTVPPGAWGPPAPYPAPTGSYPTPGLYPTPSNPFQVPSGPSGAPPMPGGPHSYH.

Residues 1 to 245 are disordered; it reads MSDEFSLADA…PMPGGPHSYH (245 aa). Residue Ser2 is modified to N-acetylserine. Phosphoserine occurs at positions 2, 6, and 15. Over residues 17 to 26 the composition is skewed to polar residues; that stretch reads AKTSAVSNTK. Low complexity predominate over residues 34–51; the sequence is WPGSNPWNNPSAPSSVPS. Pro residues-rich tracts occupy residues 74-127, 164-190, and 198-207; these read SVPP…PELP, PNMP…PPVP, and AWGPPAPYPA.

It belongs to the MISS family.

The sequence is that of MAPK-interacting and spindle-stabilizing protein-like (MAPK1IP1L) from Homo sapiens (Human).